A 447-amino-acid polypeptide reads, in one-letter code: MANVIVIGAQWGDEGKGKITDLLSRSADVVVRYQGGVNAGHTIVVKGQTFKLHLIPSGILYPDTECMIGCGTVIDPQVLIKELDQLESLNISTKNLLISETAHVTMPYHRLIDKASEERRGSHKIGTTGRGIGPTYADKSERTGIRVLDLMDPAALRDQLEWTINNKNVILEKLYNLPPLDTEEVIQEYIGYAERLRPHVVDTSLKIYDAIQRRRNILFEGAQGTLLDLDHGTYPYVTSSNPVAGGACVGTGLGPTMIDRVIGVSKAYTTRVGEGPFPTELHGELGELLCDRGAEFGTTTGRKRRCGWFDAVIGRYAVRINGMDCMAITKLDVLDELEEIQVCIAYEIDGDRCDHFPTSARQFARCRPIYKTVPGWQVPTSECRTLEDLPQQALDYLKFLAELMEVPIAIVSLGASRDQTIIVEDPIHGPKRALLHPDGTPASLLSA.

Residues 12 to 18 and 40 to 42 contribute to the GTP site; these read GDEGKGK and GHT. Asp-13 functions as the Proton acceptor in the catalytic mechanism. Mg(2+) is bound by residues Asp-13 and Gly-40. IMP-binding positions include 13-16, 38-41, Thr-128, Arg-142, Gln-223, Thr-238, and Arg-302; these read DEGK and NAGH. His-41 (proton donor) is an active-site residue. Position 298-304 (298-304) interacts with substrate; sequence TTTGRKR. Residues Arg-304, 330–332, and 412–414 contribute to the GTP site; these read KLD and SLG.

Belongs to the adenylosuccinate synthetase family. As to quaternary structure, homodimer. Mg(2+) serves as cofactor.

The protein resides in the cytoplasm. The enzyme catalyses IMP + L-aspartate + GTP = N(6)-(1,2-dicarboxyethyl)-AMP + GDP + phosphate + 2 H(+). It participates in purine metabolism; AMP biosynthesis via de novo pathway; AMP from IMP: step 1/2. Plays an important role in the de novo pathway of purine nucleotide biosynthesis. Catalyzes the first committed step in the biosynthesis of AMP from IMP. This is Adenylosuccinate synthetase from Nostoc sp. (strain PCC 7120 / SAG 25.82 / UTEX 2576).